A 357-amino-acid chain; its full sequence is Phospho-N-acetylmuramoyl-pentapeptide-transferase (357 aa).

10 helical membrane passes run 23-43, 70-90, 91-111, 127-147, 171-191, 196-216, 236-256, 260-280, 286-306, and 334-354; these read AIFS…YFIY, TMGG…YCNL, SNIY…IGFI, LKWK…MIKI, YLYI…VNLT, GLAI…SLFS, LAIL…FNSY, VFMG…IAIL, LLII…LQII, and LIIV…LISL.

The protein belongs to the glycosyltransferase 4 family. MraY subfamily. Requires Mg(2+) as cofactor.

Its subcellular location is the cell inner membrane. The enzyme catalyses UDP-N-acetyl-alpha-D-muramoyl-L-alanyl-gamma-D-glutamyl-meso-2,6-diaminopimeloyl-D-alanyl-D-alanine + di-trans,octa-cis-undecaprenyl phosphate = di-trans,octa-cis-undecaprenyl diphospho-N-acetyl-alpha-D-muramoyl-L-alanyl-D-glutamyl-meso-2,6-diaminopimeloyl-D-alanyl-D-alanine + UMP. It functions in the pathway cell wall biogenesis; peptidoglycan biosynthesis. Its function is as follows. Catalyzes the initial step of the lipid cycle reactions in the biosynthesis of the cell wall peptidoglycan: transfers peptidoglycan precursor phospho-MurNAc-pentapeptide from UDP-MurNAc-pentapeptide onto the lipid carrier undecaprenyl phosphate, yielding undecaprenyl-pyrophosphoryl-MurNAc-pentapeptide, known as lipid I. This chain is Phospho-N-acetylmuramoyl-pentapeptide-transferase, found in Buchnera aphidicola subsp. Acyrthosiphon pisum (strain 5A).